The following is a 505-amino-acid chain: Band 7 protein CG42540 (505 aa).

The interval 1–164 (MPDSMMDMEH…IHRAEARRAD (164 aa)) is disordered. Positions 47-60 (SEERDRDRDRERDH) are enriched in basic and acidic residues. Low complexity-rich tracts occupy residues 82–104 (QLHQQQPQQQQQQQPLTQLQQPQ) and 113–139 (QQQQQQQQMMQQPQQQQQMQQPQQQLP). A helical membrane pass occupies residues 178–198 (LIFLSVALVIMTLPFSLFVCF). A disordered region spans residues 443–505 (GNTPPPLQLA…QQGQQISSAM (63 aa)). The segment covering 451–505 (LAPQQQMGQQQQPQYQQPQQQQQQYQPQQQQQQQQQQPQQQDQLYQQGQQISSAM) has biased composition (low complexity).

Belongs to the band 7/mec-2 family.

The protein resides in the membrane. The protein is Band 7 protein CG42540 of Drosophila melanogaster (Fruit fly).